Reading from the N-terminus, the 308-residue chain is MLPPYFLFKEMTDTHYIGRFAPSPSGELHFGSLIAALGSYLQARARQGRWLVRIEDIDPPREVPGAAETILRQLEHYGLYWDGDVLWQSQRHHAYREALAWLHEQGLSYYCTCTRARIQSIGGIYDGHCRDLHHGPDNAAVRIRQQHPVTQFTDLLRGIIHADEKLAREDFIIHRRDGLFAYNLAVVVDDHFQGVSEIVRGADLIEPTVRQISLYQLFGWKVPDYIHLPLALNPQGAKLSKQNHAPALPKGDPRPVLIAALHFLGQQVETHWQDFSVEQILQSAVKNWTLTAVPESAIVNSTFSNASC.

L-glutamate-binding positions include arginine 19–serine 23 and glutamate 55. Residues proline 22 to serine 32 carry the 'HIGH' region motif. 4 residues coordinate Zn(2+): cysteine 111, cysteine 113, tyrosine 125, and cysteine 129. Residues tyrosine 182 and arginine 200 each coordinate L-glutamate. A 'KMSKS' region motif is present at residues lysine 238–glutamine 242. Lysine 241 contacts ATP.

Belongs to the class-I aminoacyl-tRNA synthetase family. GluQ subfamily. The cofactor is Zn(2+).

Catalyzes the tRNA-independent activation of glutamate in presence of ATP and the subsequent transfer of glutamate onto a tRNA(Asp). Glutamate is transferred on the 2-amino-5-(4,5-dihydroxy-2-cyclopenten-1-yl) moiety of the queuosine in the wobble position of the QUC anticodon. The protein is Glutamyl-Q tRNA(Asp) synthetase of Escherichia coli O6:H1 (strain CFT073 / ATCC 700928 / UPEC).